Reading from the N-terminus, the 249-residue chain is 2,3-bisphosphoglycerate-dependent phosphoglycerate mutase (249 aa).

Substrate contacts are provided by residues 11 to 18 (RHGESEWN), 24 to 25 (TG), R63, 90 to 93 (ERHY), K101, and 117 to 118 (RR). The active-site Tele-phosphohistidine intermediate is H12. Residue E90 is the Proton donor/acceptor of the active site. Residues 119 to 138 (SYDTPPPPIERGSTYSQDAD) are disordered. 184–185 (GN) contributes to the substrate binding site.

This sequence belongs to the phosphoglycerate mutase family. BPG-dependent PGAM subfamily.

It catalyses the reaction (2R)-2-phosphoglycerate = (2R)-3-phosphoglycerate. It participates in carbohydrate degradation; glycolysis; pyruvate from D-glyceraldehyde 3-phosphate: step 3/5. Catalyzes the interconversion of 2-phosphoglycerate and 3-phosphoglycerate. The chain is 2,3-bisphosphoglycerate-dependent phosphoglycerate mutase from Mycolicibacterium paratuberculosis (strain ATCC BAA-968 / K-10) (Mycobacterium paratuberculosis).